The sequence spans 397 residues: Staphylopine export protein (397 aa).

A run of 12 helical transmembrane segments spans residues 12–32 (LYILTLMFFSANAILNVFIPL), 38–58 (GATNTVIGIVMGAYMLTAMVF), 77–97 (IILIINAIALIIYGFTGLEGY), 102–122 (VMQGVCTAFFSMSLQLGIIDA), 134–154 (LYSLFSTIPNLIGPLVAVGIW), 158–178 (NISLFAIVIIFIALTTTFFGY), 217–237 (GIIMIVASIVFGAVSTFVPLY), 239–259 (VSLGFANAGIFLTIQAIAVVA), 285–305 (LLVIASFVVAFGPQVGAIIFY), 309–329 (ILIGMTQAMVYPTLTSYLSFV), 337–357 (MLLGLFIACADLGISLGGALM), and 363–383 (LVGFKWMYLICGMLVIVIMIM).

The protein belongs to the major facilitator superfamily.

The protein resides in the cell membrane. In terms of biological role, involved in the export of the metallophore staphylopine. The chain is Staphylopine export protein from Staphylococcus aureus (strain Mu50 / ATCC 700699).